We begin with the raw amino-acid sequence, 54 residues long: Protein YmjE (54 aa).

The sequence is that of Protein YmjE from Escherichia coli (strain K12).